A 304-amino-acid chain; its full sequence is DCN1-like protein 3 (304 aa).

2 disordered regions span residues 1–86 (MGQC…AEES) and 284–304 (EGEGRGALSSGPEGLCPEEQT). Gly2 is lipidated: N-myristoyl glycine. Residues 86–278 (SSLQRLEELF…LFDTFVEWEM (193 aa)) enclose the DCUN1 domain.

As to quaternary structure, part of a complex containing DCUN1D3, CUL3 and RBX1. Interacts (via the DCUN1 domain) with the unneddylated cullins: interacts with CUL1, CUL2, CUL3, CUL4A, CUL4B and CUL5; these interactions promote the cullin neddylation and the identity of the cullin dictates the affinity of the interaction. Interacts preferentially with CUL3; this interaction triggers the relocalization of CUL3 to the cell membrane where CUL3 is neddylated. Interacts (via DCUN1 domain) with RBX1. May also interact with regulators or subunits of cullin-RING ligases such as RNF7, ELOB and DDB1; these interactions are bridged by cullins. Interacts (via DCUN1 domain) with CAND1; this interaction is bridged by cullins and strongly inhibits cullin neddylation. These CAND-cullin-DCNL complexes can only be neddylated in the presence of a substrate adapter. Interacts (via DCUN1 domain) with the N-terminally acetylated form of UBE2M and UBE2F.

Its subcellular location is the cell membrane. The protein localises to the cytoplasm. It is found in the nucleus. It localises to the perinuclear region. Its function is as follows. Contributes to the neddylation of all cullins by transferring NEDD8 from N-terminally acetylated NEDD8-conjugating E2s enzyme to different cullin C-terminal domain-RBX complexes and may play a role in the cell cycle progression by regulating the SCF ubiquitin E3 ligase complex, after UV damage. At the cell membrane, can promote and as well inhibit cullins neddylation. The protein is DCN1-like protein 3 of Pongo abelii (Sumatran orangutan).